Consider the following 357-residue polypeptide: Chorismate synthase (357 aa).

Residue arginine 47 participates in NADP(+) binding. FMN contacts are provided by residues 123-125 (RAS), glycine 281, 296-300 (KPTSS), and arginine 324.

The protein belongs to the chorismate synthase family. In terms of assembly, homotetramer. The cofactor is FMNH2.

It catalyses the reaction 5-O-(1-carboxyvinyl)-3-phosphoshikimate = chorismate + phosphate. It functions in the pathway metabolic intermediate biosynthesis; chorismate biosynthesis; chorismate from D-erythrose 4-phosphate and phosphoenolpyruvate: step 7/7. In terms of biological role, catalyzes the anti-1,4-elimination of the C-3 phosphate and the C-6 proR hydrogen from 5-enolpyruvylshikimate-3-phosphate (EPSP) to yield chorismate, which is the branch point compound that serves as the starting substrate for the three terminal pathways of aromatic amino acid biosynthesis. This reaction introduces a second double bond into the aromatic ring system. This chain is Chorismate synthase, found in Chlamydia trachomatis serovar L2 (strain ATCC VR-902B / DSM 19102 / 434/Bu).